A 223-amino-acid chain; its full sequence is Ribonuclease 3 (223 aa).

An RNase III domain is found at 3 to 125 (LERLQKKLGY…IIAAIYLDAG (123 aa)). Glu38 provides a ligand contact to Mg(2+). Asp42 is an active-site residue. The Mg(2+) site is built by Asp111 and Glu114. Residue Glu114 is part of the active site. The region spanning 152-222 (DPKTRLQEFL…AEQVLAKLTT (71 aa)) is the DRBM domain.

The protein belongs to the ribonuclease III family. In terms of assembly, homodimer. Mg(2+) is required as a cofactor.

It is found in the cytoplasm. The enzyme catalyses Endonucleolytic cleavage to 5'-phosphomonoester.. In terms of biological role, digests double-stranded RNA. Involved in the processing of primary rRNA transcript to yield the immediate precursors to the large and small rRNAs (23S and 16S). Processes some mRNAs, and tRNAs when they are encoded in the rRNA operon. Processes pre-crRNA and tracrRNA of type II CRISPR loci if present in the organism. In Actinobacillus pleuropneumoniae serotype 3 (strain JL03), this protein is Ribonuclease 3.